The following is a 387-amino-acid chain: Succinate--CoA ligase [ADP-forming] subunit beta (387 aa).

Residues lysine 9–lysine 245 enclose the ATP-grasp domain. ATP is bound by residues lysine 46, glycine 53–glycine 55, glutamate 100, tyrosine 103, and glutamate 108. Residues asparagine 200 and aspartate 214 each contribute to the Mg(2+) site. Residues asparagine 265 and glycine 322–valine 324 contribute to the substrate site.

This sequence belongs to the succinate/malate CoA ligase beta subunit family. Heterotetramer of two alpha and two beta subunits. It depends on Mg(2+) as a cofactor.

The catalysed reaction is succinate + ATP + CoA = succinyl-CoA + ADP + phosphate. It carries out the reaction GTP + succinate + CoA = succinyl-CoA + GDP + phosphate. The protein operates within carbohydrate metabolism; tricarboxylic acid cycle; succinate from succinyl-CoA (ligase route): step 1/1. In terms of biological role, succinyl-CoA synthetase functions in the citric acid cycle (TCA), coupling the hydrolysis of succinyl-CoA to the synthesis of either ATP or GTP and thus represents the only step of substrate-level phosphorylation in the TCA. The beta subunit provides nucleotide specificity of the enzyme and binds the substrate succinate, while the binding sites for coenzyme A and phosphate are found in the alpha subunit. This is Succinate--CoA ligase [ADP-forming] subunit beta from Francisella tularensis subsp. tularensis (strain WY96-3418).